The chain runs to 730 residues: Aspyridones cluster regulator apdR (730 aa).

Residues 20-46 (CTECRRRKIRCDQATPCRHCEKAALRC) constitute a DNA-binding region (zn(2)-C6 fungal-type).

The protein resides in the nucleus. In terms of biological role, transcription factor involved in regulation of gene cluster that mediates the biosynthesis of aspyridones. The chain is Aspyridones cluster regulator apdR from Emericella nidulans (strain FGSC A4 / ATCC 38163 / CBS 112.46 / NRRL 194 / M139) (Aspergillus nidulans).